A 370-amino-acid polypeptide reads, in one-letter code: Pyruvate dehydrogenase E1 component subunit alpha (370 aa).

As to quaternary structure, heterodimer of an alpha and a beta chain. The cofactor is thiamine diphosphate.

The catalysed reaction is N(6)-[(R)-lipoyl]-L-lysyl-[protein] + pyruvate + H(+) = N(6)-[(R)-S(8)-acetyldihydrolipoyl]-L-lysyl-[protein] + CO2. Its function is as follows. The pyruvate dehydrogenase complex catalyzes the overall conversion of pyruvate to acetyl-CoA and CO(2). It contains multiple copies of three enzymatic components: pyruvate dehydrogenase (E1), dihydrolipoamide acetyltransferase (E2) and lipoamide dehydrogenase (E3). This is Pyruvate dehydrogenase E1 component subunit alpha (pdhA) from Staphylococcus aureus (strain MRSA252).